Here is a 350-residue protein sequence, read N- to C-terminus: Biotin synthase (350 aa).

Positions 41 to 268 (NEVQISRLLS…LSRVRLSAGR (228 aa)) constitute a Radical SAM core domain. Residues cysteine 56, cysteine 60, and cysteine 63 each contribute to the [4Fe-4S] cluster site. Residues cysteine 100, cysteine 131, cysteine 191, and arginine 263 each coordinate [2Fe-2S] cluster.

This sequence belongs to the radical SAM superfamily. Biotin synthase family. As to quaternary structure, homodimer. Requires [4Fe-4S] cluster as cofactor. [2Fe-2S] cluster is required as a cofactor.

The enzyme catalyses (4R,5S)-dethiobiotin + (sulfur carrier)-SH + 2 reduced [2Fe-2S]-[ferredoxin] + 2 S-adenosyl-L-methionine = (sulfur carrier)-H + biotin + 2 5'-deoxyadenosine + 2 L-methionine + 2 oxidized [2Fe-2S]-[ferredoxin]. It functions in the pathway cofactor biosynthesis; biotin biosynthesis; biotin from 7,8-diaminononanoate: step 2/2. Functionally, catalyzes the conversion of dethiobiotin (DTB) to biotin by the insertion of a sulfur atom into dethiobiotin via a radical-based mechanism. This is Biotin synthase from Shewanella baltica (strain OS223).